The following is a 255-amino-acid chain: Protein BEAN1 (255 aa).

A helical membrane pass occupies residues 37 to 57 (VLVASAVIGVVITLSCITIIV). The segment covering 69-90 (QRHHHRHRRHHHHHRHRRRRHR) has biased composition (basic residues). Disordered stretches follow at residues 69 to 109 (QRHH…MPYA) and 160 to 255 (DAPP…ERIV). Positions 193–206 (QRTQGQSRLHTVSM) are enriched in polar residues. The span at 217-226 (GTGSPSDLLP) shows a compositional bias: low complexity. The span at 234-243 (PSNSQGSPIP) shows a compositional bias: polar residues. A compositionally biased stretch (pro residues) spans 244-255 (TQAPMPSPERIV).

Interacts with NEDD4.

It localises to the membrane. This Mus musculus (Mouse) protein is Protein BEAN1 (Bean1).